Consider the following 605-residue polypeptide: Isocitrate dehydrogenase kinase/phosphatase (605 aa).

ATP-binding positions include 327-333 and K348; that span reads APGIKGL. D383 is an active-site residue.

The protein belongs to the AceK family.

It is found in the cytoplasm. The enzyme catalyses L-seryl-[isocitrate dehydrogenase] + ATP = O-phospho-L-seryl-[isocitrate dehydrogenase] + ADP + H(+). Its function is as follows. Bifunctional enzyme which can phosphorylate or dephosphorylate isocitrate dehydrogenase (IDH) on a specific serine residue. This is a regulatory mechanism which enables bacteria to bypass the Krebs cycle via the glyoxylate shunt in response to the source of carbon. When bacteria are grown on glucose, IDH is fully active and unphosphorylated, but when grown on acetate or ethanol, the activity of IDH declines drastically concomitant with its phosphorylation. This Burkholderia orbicola (strain AU 1054) protein is Isocitrate dehydrogenase kinase/phosphatase.